A 430-amino-acid chain; its full sequence is Flavin-dependent monooxygenase eupH (430 aa).

FAD contacts are provided by residues 11 to 14 (AGIG), 33 to 34 (ER), Gln-43, Arg-107, Tyr-282, and Asp-306.

The protein belongs to the aromatic-ring hydroxylase family. The cofactor is FAD.

It functions in the pathway secondary metabolite biosynthesis; terpenoid biosynthesis. Flavin-dependent monooxygenase; part of the gene cluster that mediates the biosynthesis of eupenifeldin, a bistropolone meroterpenoid that acts as an antitumor agent. The first step of eupenifeldin biosynthesis is the biosynthesis of 3-methylorcinaldehyde performed by the non-reducing polyketide synthase eupA. Oxidative dearomatization of 3-methylorcinaldehyde likely catalyzed by the FAD-dependent monooxygenase eupB is followed by oxidative ring expansion by the 2-oxoglutarate-dependent dioxygenase eupC to provide the first tropolone metabolite, tropolone stipitaldehyde. In parallel, generation of sesquiterpene alpha-humulene from farnesylpyrophosphate (FPP) is catalyzed by the terpene cyclase eupE. The cytochrome P450 monooxygenase eupD then hydroxylates humulene to humulenol. The putative Diels-Alderase eupF probably catalyzes the formation of the tropolone-humulene skeleton by linking humulenol and the polyketide moiety. The short-chain dehydrogenase/reductase eupG and the flavin-dependent monooxygenase eupH are also essential for eupenifeldin biosynthesis and are likely the additional decorating enzymes of the tropolone-humulene skeleton to produce final eupenifeldin or derivatives. The polypeptide is Flavin-dependent monooxygenase eupH (Phoma sp).